The primary structure comprises 384 residues: G protein-coupled receptor 88 (384 aa).

Residues 1 to 35 (MTNSSSTSTSTTTGGSLLLLCEEEESWAGRRIPVS) lie on the Extracellular side of the membrane. Asparagine 3 is a glycosylation site (N-linked (GlcNAc...) asparagine). The chain crosses the membrane as a helical span at residues 36-56 (LLYSGLAIGGTLANGMVIYLV). Over 57–73 (SSFRKLQTTSNAFIVNG) the chain is Cytoplasmic. The chain crosses the membrane as a helical span at residues 74–94 (CAADLSVCALWMPQEAVLGLL). Residues 95-116 (PSGSAEPPGDWDGGGGSYRLLR) lie on the Extracellular side of the membrane. The chain crosses the membrane as a helical span at residues 117-136 (GGLLGLGLTVSLLSHCLVAL). Residues 137–158 (NRYLLITRAPATYQVLYQRRHT) lie on the Cytoplasmic side of the membrane. Residues 159–179 (VGMLALSWALALGLVLLLPPW) traverse the membrane as a helical segment. The Extracellular portion of the chain corresponds to 180-195 (APKPGAEPPQVHYPAL). The helical transmembrane segment at 196–216 (LAAGALLAQTALLLHCYLGIV) threads the bilayer. Topologically, residues 217–285 (RRVRVSVKRV…RAQRRLSGLS (69 aa)) are cytoplasmic. The chain crosses the membrane as a helical span at residues 286 to 306 (VLLLCCVFLLATQPLVWVSLA). At 307-310 (SGFS) the chain is on the extracellular side. A helical membrane pass occupies residues 311 to 331 (LPVPWGVQAASWLLCCALSAL). Topologically, residues 332–384 (NPLLYTWRNEEFRRSVRSVLPGVGDAAAAAAAATAVPAMSQAQLGTRAAGQHW) are cytoplasmic.

It belongs to the G-protein coupled receptor 1 family. As to expression, expressed predominantly in the striatum.

Its subcellular location is the cell membrane. It is found in the cell projection. The protein resides in the cilium membrane. The protein localises to the cytoplasm. It localises to the nucleus. In terms of biological role, orphan G protein-coupled receptor implicated in a large repertoire of behavioral responses that engage motor activities, spatial learning, and emotional processing. May play a role in the regulation of cognitive and motor function. Couples with the heterotrimeric G protein complex of the G(i) subfamily, consisting of GNAI1, GNB1 and GNG2, thereby acting through a G(i)-mediated pathway. Plays a role in the attenuation of D1 dopamine receptor (D1R)-mediated cAMP response in ciliated cells. In on-ciliated cells, involved in the inhibition of the beta-2 adrenergic receptor (B2AR) response. This chain is G protein-coupled receptor 88 (Gpr88), found in Mus musculus (Mouse).